Consider the following 493-residue polypeptide: Vacuolar-processing enzyme (493 aa).

A signal peptide spans 1–19; that stretch reads MGSSQLSTLLFFTIVVTFL. A glycan (N-linked (GlcNAc...) asparagine) is linked at Asn147. His174 is an active-site residue. Cys216 functions as the Nucleophile in the catalytic mechanism. The cysteines at positions 249 and 263 are disulfide-linked. Asn295 and Asn331 each carry an N-linked (GlcNAc...) asparagine glycan. Cystine bridges form between Cys429-Cys459 and Cys441-Cys476.

This sequence belongs to the peptidase C13 family.

Functionally, asparagine-specific endopeptidase involved in the processing of vacuolar seed protein precursors into the mature forms. This Vicia sativa (Spring vetch) protein is Vacuolar-processing enzyme.